A 363-amino-acid chain; its full sequence is DNA replication and repair protein RecF (363 aa).

30–37 provides a ligand contact to ATP; the sequence is GPNGSGKT.

It belongs to the RecF family.

It localises to the cytoplasm. In terms of biological role, the RecF protein is involved in DNA metabolism; it is required for DNA replication and normal SOS inducibility. RecF binds preferentially to single-stranded, linear DNA. It also seems to bind ATP. In Chlorobium limicola (strain DSM 245 / NBRC 103803 / 6330), this protein is DNA replication and repair protein RecF.